A 481-amino-acid chain; its full sequence is E3 ubiquitin-protein ligase makorin-1 (481 aa).

3 consecutive C3H1-type zinc fingers follow at residues tryptophan 55 to serine 82, serine 84 to proline 111, and glutamate 208 to serine 235. Residues cysteine 236–histidine 263 are makorin-type Cys-His. The RING-type zinc-finger motif lies at cysteine 281–arginine 335. The C3H1-type 4 zinc-finger motif lies at alanine 364–proline 393.

As to quaternary structure, interacts with p53/TP53 and CDKN1A. Interacts with TERT, modulating telomere length homeostasis. In terms of processing, auto-ubiquitinated; which leads to proteasomal degradation. In terms of tissue distribution, highly expressed in embryo, in specific cell types of the central nervous system, in brain with the strongest levels of expression in the mantle layers and in testis. Moderate to low levels in somatic tissues.

It catalyses the reaction S-ubiquitinyl-[E2 ubiquitin-conjugating enzyme]-L-cysteine + [acceptor protein]-L-lysine = [E2 ubiquitin-conjugating enzyme]-L-cysteine + N(6)-ubiquitinyl-[acceptor protein]-L-lysine.. Its pathway is protein modification; protein ubiquitination. E3 ubiquitin ligase catalyzing the covalent attachment of ubiquitin moieties onto substrate proteins. These substrates include FILIP1, p53/TP53, CDKN1A and TERT. Keeps cells alive by suppressing p53/TP53 under normal conditions, but stimulates apoptosis by repressing CDKN1A under stress conditions. Acts as a negative regulator of telomerase. Has negative and positive effects on RNA polymerase II-dependent transcription. The chain is E3 ubiquitin-protein ligase makorin-1 (Mkrn1) from Mus musculus (Mouse).